Reading from the N-terminus, the 189-residue chain is Ribosome maturation factor RimM (189 aa).

The PRC barrel domain maps to 95-169; it reads DEDEFFQTDL…IIKVEPHAAG (75 aa). A disordered region spans residues 168–189; that stretch reads AGLIADEHDNPPHESGKKPKKP. The segment covering 172–189 has biased composition (basic and acidic residues); sequence ADEHDNPPHESGKKPKKP.

This sequence belongs to the RimM family. As to quaternary structure, binds ribosomal protein uS19.

It is found in the cytoplasm. Functionally, an accessory protein needed during the final step in the assembly of 30S ribosomal subunit, possibly for assembly of the head region. Essential for efficient processing of 16S rRNA. May be needed both before and after RbfA during the maturation of 16S rRNA. It has affinity for free ribosomal 30S subunits but not for 70S ribosomes. This chain is Ribosome maturation factor RimM, found in Brucella abortus (strain S19).